The sequence spans 161 residues: MSKTRAVIPGSFDPITYGHLDIIERSADRFDEIHVCVLKNSSKGGTFDSEERMTLIEESVKHLPNIQVHHFNGLLVDFCDQVGAKTIIRGLRAVSDFEYELRLTSMNKKLNSNIETMYMMTSANYSFISSSIVKEVAAYQADISPFVPPHVERALKKKFNV.

A substrate-binding site is contributed by Ser11. ATP contacts are provided by residues 11-12 and His19; that span reads SF. 3 residues coordinate substrate: Lys43, Leu75, and Arg89. ATP contacts are provided by residues 90–92, Glu100, and 125–131; these read GLR and YSFISSS.

Belongs to the bacterial CoaD family. Homohexamer. Mg(2+) is required as a cofactor.

The protein resides in the cytoplasm. It carries out the reaction (R)-4'-phosphopantetheine + ATP + H(+) = 3'-dephospho-CoA + diphosphate. The protein operates within cofactor biosynthesis; coenzyme A biosynthesis; CoA from (R)-pantothenate: step 4/5. Reversibly transfers an adenylyl group from ATP to 4'-phosphopantetheine, yielding dephospho-CoA (dPCoA) and pyrophosphate. The protein is Phosphopantetheine adenylyltransferase of Staphylococcus epidermidis (strain ATCC 35984 / DSM 28319 / BCRC 17069 / CCUG 31568 / BM 3577 / RP62A).